The following is a 308-amino-acid chain: Mitochondrial import receptor subunit TOM40B (308 aa).

The tract at residues 1-29 (MGNTLGLAPMGALPRRSPRREEPLPNPGS) is disordered. The segment at 281–308 (PLPVTLALGAFLNHWRNRFHCGFSITVG) is required for mitochondrial targeting.

It belongs to the Tom40 family. Forms part of the preprotein translocase of the outer mitochondrial membrane (TOM complex) containing TOMM22, TOMM40, TOMM40L and TOMM70. Interacts with mitochondrial targeting sequences.

Its subcellular location is the mitochondrion outer membrane. In terms of biological role, potential channel-forming protein implicated in import of protein precursors into mitochondria. The chain is Mitochondrial import receptor subunit TOM40B from Bos taurus (Bovine).